A 349-amino-acid chain; its full sequence is Nicotinate-nucleotide--dimethylbenzimidazole phosphoribosyltransferase (349 aa).

Catalysis depends on Glu-315, which acts as the Proton acceptor.

Belongs to the CobT family.

It carries out the reaction 5,6-dimethylbenzimidazole + nicotinate beta-D-ribonucleotide = alpha-ribazole 5'-phosphate + nicotinate + H(+). Its pathway is nucleoside biosynthesis; alpha-ribazole biosynthesis; alpha-ribazole from 5,6-dimethylbenzimidazole: step 1/2. Catalyzes the synthesis of alpha-ribazole-5'-phosphate from nicotinate mononucleotide (NAMN) and 5,6-dimethylbenzimidazole (DMB). In Variovorax paradoxus (strain S110), this protein is Nicotinate-nucleotide--dimethylbenzimidazole phosphoribosyltransferase.